A 176-amino-acid chain; its full sequence is Large ribosomal subunit protein eL6 (176 aa).

The interval 1 to 27 is disordered; that stretch reads MSQVAPKWYQSEDVPAPKQTRKTARPQ.

The protein belongs to the eukaryotic ribosomal protein eL6 family. In terms of assembly, component of the large ribosomal subunit. Mature ribosomes consist of a small (40S) and a large (60S) subunit. The 40S subunit contains about 32 different proteins and 1 molecule of RNA (18S). The 60S subunit contains 45 different proteins and 3 molecules of RNA (25S, 5.8S and 5S).

The protein localises to the cytoplasm. Its function is as follows. Component of the ribosome, a large ribonucleoprotein complex responsible for the synthesis of proteins in the cell. The small ribosomal subunit (SSU) binds messenger RNAs (mRNAs) and translates the encoded message by selecting cognate aminoacyl-transfer RNA (tRNA) molecules. The large subunit (LSU) contains the ribosomal catalytic site termed the peptidyl transferase center (PTC), which catalyzes the formation of peptide bonds, thereby polymerizing the amino acids delivered by tRNAs into a polypeptide chain. The nascent polypeptides leave the ribosome through a tunnel in the LSU and interact with protein factors that function in enzymatic processing, targeting, and the membrane insertion of nascent chains at the exit of the ribosomal tunnel. The protein is Large ribosomal subunit protein eL6 of Candida albicans (strain SC5314 / ATCC MYA-2876) (Yeast).